The sequence spans 239 residues: Ribosomal RNA small subunit methyltransferase G (239 aa).

S-adenosyl-L-methionine-binding positions include Gly-105, Leu-110, 156–157 (VE), and Arg-169.

Belongs to the methyltransferase superfamily. RNA methyltransferase RsmG family.

It is found in the cytoplasm. It catalyses the reaction guanosine(527) in 16S rRNA + S-adenosyl-L-methionine = N(7)-methylguanosine(527) in 16S rRNA + S-adenosyl-L-homocysteine. Its function is as follows. Specifically methylates the N7 position of guanine in position 527 of 16S rRNA. This Verminephrobacter eiseniae (strain EF01-2) protein is Ribosomal RNA small subunit methyltransferase G.